The primary structure comprises 546 residues: MSAKEVRFSDDARSRMVRGVNVLANAVKVTLGPKGRNVVLEKSFGAPTVTKDGVSVAKEIELEDKFENMGAQMVKEVSSQTSDIAGDGTTTATVLAQAIVREGMKSVTAGMNPMDLKRGIDKAVIAAVEELKKLSKPCTDSKAIAQVGTISANSDESIGQIIADAMAKVGKEGVITVEEGSSLENELDVVEGMQFDRGYLSPYFVNNQQNMSAELDDCFVLLYDKKISNIRDLLPVLEGVAKAGKPLLIIAEDIEGEALATLVVNTIRGIVKVAAVKAPGFGDRRKAMLQDIAILTGGQVISEEVGLSLEKASLDDLGQAKRIVVTKENSTIIDGAGKPDEIKGRVEQIRAQIEDATSDYDKEKLQERVAKLAGGVAVIKVGAATEVEMKEKKARVEDALHATRAAVEEGVVPGGGVALVRALQALKSLKGANHDQDIGIAIARRAMEEPLRQIVSNCGEEPSVVLNNVVEGKGNYGYNAATGEYGDMIEMGILDPTKVTRSALQNAASVSGLIITTEAMVAELPKKGDSAPAGGGMGDMGGMGMM.

ATP contacts are provided by residues 30-33, Lys51, 87-91, Gly415, 479-481, and Asp495; these read TLGP, DGTTT, and NAA. The segment at 526-546 is disordered; the sequence is KKGDSAPAGGGMGDMGGMGMM. Residues 533 to 546 show a composition bias toward gly residues; sequence AGGGMGDMGGMGMM.

It belongs to the chaperonin (HSP60) family. As to quaternary structure, forms a cylinder of 14 subunits composed of two heptameric rings stacked back-to-back. Interacts with the co-chaperonin GroES.

It localises to the cytoplasm. The enzyme catalyses ATP + H2O + a folded polypeptide = ADP + phosphate + an unfolded polypeptide.. Together with its co-chaperonin GroES, plays an essential role in assisting protein folding. The GroEL-GroES system forms a nano-cage that allows encapsulation of the non-native substrate proteins and provides a physical environment optimized to promote and accelerate protein folding. In Thioalkalivibrio sulfidiphilus (strain HL-EbGR7), this protein is Chaperonin GroEL.